The sequence spans 519 residues: Bifunctional purine biosynthesis protein PurH (519 aa).

The 145-residue stretch at 1–145 (MQPIQRALIS…KNHASVTVVV (145 aa)) folds into the MGS-like domain.

The protein belongs to the PurH family.

The catalysed reaction is (6R)-10-formyltetrahydrofolate + 5-amino-1-(5-phospho-beta-D-ribosyl)imidazole-4-carboxamide = 5-formamido-1-(5-phospho-D-ribosyl)imidazole-4-carboxamide + (6S)-5,6,7,8-tetrahydrofolate. It carries out the reaction IMP + H2O = 5-formamido-1-(5-phospho-D-ribosyl)imidazole-4-carboxamide. The protein operates within purine metabolism; IMP biosynthesis via de novo pathway; 5-formamido-1-(5-phospho-D-ribosyl)imidazole-4-carboxamide from 5-amino-1-(5-phospho-D-ribosyl)imidazole-4-carboxamide (10-formyl THF route): step 1/1. It participates in purine metabolism; IMP biosynthesis via de novo pathway; IMP from 5-formamido-1-(5-phospho-D-ribosyl)imidazole-4-carboxamide: step 1/1. This chain is Bifunctional purine biosynthesis protein PurH, found in Allochromatium vinosum (strain ATCC 17899 / DSM 180 / NBRC 103801 / NCIMB 10441 / D) (Chromatium vinosum).